The sequence spans 94 residues: Cell division protein FtsB (94 aa).

Residues 1–3 are Cytoplasmic-facing; it reads MRV. The helical transmembrane segment at 4-21 threads the bilayer; that stretch reads FALTLSLLLVWLLYTLMW. Residues 22 to 94 lie on the Periplasmic side of the membrane; it reads GKNGVMDFRA…YRIIGEESRQ (73 aa). The stretch at 33-76 forms a coiled coil; it reads QAEIEVQQQVNANLHLRNQEMFAEIDDLRQGLDAIEERARNELG.

This sequence belongs to the FtsB family. As to quaternary structure, part of a complex composed of FtsB, FtsL and FtsQ.

It is found in the cell inner membrane. Essential cell division protein. May link together the upstream cell division proteins, which are predominantly cytoplasmic, with the downstream cell division proteins, which are predominantly periplasmic. The protein is Cell division protein FtsB of Vibrio cholerae serotype O1 (strain ATCC 39315 / El Tor Inaba N16961).